The sequence spans 698 residues: MPSDVRSLLAGTRNIGIMAHIDAGKTTTTERILFYTGVNYKIGEVHEGGATMDWMEQEQERGITITSAATTCLWRDHTINIIDTPGHVDFTVEVERSLRVLDGAVAVFDAVAGVEPQSETVWKQADRYNVPRIAFVNKMDRVGAEFHRCVEMMIDRLDATPAVIQLPWGVEADFRGVIDLVRMKGLLWKTEDKGASYETVDIPRDHLEAAQEWRDKLLETVAENDDELMELYLEGEEPSTEQLVAALRRATLASKVNPVLCGSAFKNKGVQPMLDAVVDFLPNPLDIGATVGHAVGDEETEVRREPSEDEPFSALAFKIMSDPYVGKLTYIRVYSGKLTGGSPVLNSTKDRKERVGRILQMHANHREDREGVGAGQIVAVVGLKNTTTGDTLCDPNAPVILESMTFPAPVIHVAIEPKTKADQQKLGTAIQRLAEEDPTFQVRTDEETGQTIIAGMGELHLDVLVDRMRREFGVEANVGKPQVAYRETIRRKVEKVDYTHKKQTGGSGQYARVIINLEPSGGDGGGYEFENKVTGGRIPREYIPSVDAGCQEAMEFGVLAGYPLVDVKVTLLDGQFHDVDSSELAFKIAGSMAFKDAARKADPVLLEPLMAVEVTTPEDHMGDVIGDLNSRRGQIQAMEERGGSRIVRALVPLSEMFGYVGDLRSKTSGRASYSMQFDSYAEVPANVAKEIIAKARGE.

A tr-type G domain is found at 10 to 285 (AGTRNIGIMA…AVVDFLPNPL (276 aa)). GTP is bound by residues 19–26 (AHIDAGKT), 83–87 (DTPGH), and 137–140 (NKMD).

It belongs to the TRAFAC class translation factor GTPase superfamily. Classic translation factor GTPase family. EF-G/EF-2 subfamily.

The protein resides in the cytoplasm. Functionally, catalyzes the GTP-dependent ribosomal translocation step during translation elongation. During this step, the ribosome changes from the pre-translocational (PRE) to the post-translocational (POST) state as the newly formed A-site-bound peptidyl-tRNA and P-site-bound deacylated tRNA move to the P and E sites, respectively. Catalyzes the coordinated movement of the two tRNA molecules, the mRNA and conformational changes in the ribosome. The chain is Elongation factor G from Frankia casuarinae (strain DSM 45818 / CECT 9043 / HFP020203 / CcI3).